Reading from the N-terminus, the 693-residue chain is Elongation factor G (693 aa).

The region spanning 9 to 283 (ERVRNIGIIA…AVCDYLPSPV (275 aa)) is the tr-type G domain. GTP is bound by residues 18–25 (AHIDAGKT), 82–86 (DTPGH), and 136–139 (NKMD).

The protein belongs to the TRAFAC class translation factor GTPase superfamily. Classic translation factor GTPase family. EF-G/EF-2 subfamily.

Its subcellular location is the cytoplasm. In terms of biological role, catalyzes the GTP-dependent ribosomal translocation step during translation elongation. During this step, the ribosome changes from the pre-translocational (PRE) to the post-translocational (POST) state as the newly formed A-site-bound peptidyl-tRNA and P-site-bound deacylated tRNA move to the P and E sites, respectively. Catalyzes the coordinated movement of the two tRNA molecules, the mRNA and conformational changes in the ribosome. This is Elongation factor G from Dehalococcoides mccartyi (strain ATCC BAA-2266 / KCTC 15142 / 195) (Dehalococcoides ethenogenes (strain 195)).